Consider the following 118-residue polypeptide: Large ribosomal subunit protein bL20 (118 aa).

This sequence belongs to the bacterial ribosomal protein bL20 family.

Functionally, binds directly to 23S ribosomal RNA and is necessary for the in vitro assembly process of the 50S ribosomal subunit. It is not involved in the protein synthesizing functions of that subunit. The chain is Large ribosomal subunit protein bL20 from Buchnera aphidicola subsp. Acyrthosiphon pisum (strain 5A).